Consider the following 1047-residue polypeptide: Rab11 family-interacting protein 3 (1047 aa).

Disordered stretches follow at residues 1 to 107 (MELC…WPQE), 311 to 335 (SHSC…DVSH), and 475 to 496 (PGPP…TAQE). Basic and acidic residues predominate over residues 64 to 73 (EPHAPSRWAK). EF-hand domains lie at 496-531 (EEGA…YGAE) and 528-563 (YGAE…IRNG). Ca(2+) contacts are provided by D509, D511, D513, D520, D541, S543, and D552. S641, S765, and S829 each carry phosphoserine. Residues 750–985 (EEDIADKVIF…NGQIITLSIQ (236 aa)) are a coiled coil. Residues 775–879 (GEQHGRLRQE…MLDEIEELTQ (105 aa)) form an ARF-binding domain (ABD) region. The tract at residues 882–906 (SEEQENKRKMGDRLSHERHQFQRDK) is disordered. 2 positions are modified to phosphoserine: S938 and S939. The 63-residue stretch at 985-1047 (QGAKSLFSTS…ETNPSILEVK (63 aa)) folds into the FIP-RBD domain.

In terms of assembly, homodimer. Interacts with RAB11A; the interaction is direct and is required for the recruitment to endosomes. Interacts with RAB11B. Forms a ternary complex with RAB11A and dynein intermediate chain DYNC1LI1; RAB11FIP3 links RAB11A to dynein and the interaction regulates endocytic trafficking. Interacts with dynein intermediate chain and dynactin (DCTN1); the interaction activates dynein processivity. Interacts with ARF6 and EXOC7; the interaction serves for recruitment and tethering of recycling endosomes-derived vesicles to the cleavage furrow/midbody. Interacts with RACGAP1/MgcRacGAP; the interaction occurs at late telophase and is required for recruitment and tethering of recycling endosomes-derived vesicles to the cleavage furrow/midbody. Forms a complex with RAB11A and Rabin8/RAB3IP, probably a heterohexamer with two of each protein subunit, where RAB3IP and RAB11FIP3 simultaneously bind to RAB11A; the complex promotes preciliary trafficking. Forms a complex containing RAB11A, ASAP1, RAB3IP, RAP11FIP3 and ARF4; the complex promotes preciliary trafficking; the complex binds to RHO in photoreceptor cells and promotes RHO ciliary transport. Interacts with RAB11FIP4. Interacts with RAB25.

Its subcellular location is the recycling endosome membrane. It localises to the cytoplasm. The protein localises to the cytoskeleton. It is found in the microtubule organizing center. The protein resides in the centrosome. Its subcellular location is the cleavage furrow. It localises to the midbody. The protein localises to the golgi apparatus membrane. It is found in the golgi apparatus. The protein resides in the trans-Golgi network membrane. Its function is as follows. Downstream effector molecule for Rab11 GTPase which is involved in endocytic trafficking, cytokinesis and intracellular ciliogenesis by participating in membrane delivery. Recruited by Rab11 to endosomes where it links Rab11 to dynein motor complex. The functional Rab11-RAB11FIP3-dynein complex regulates the movement of peripheral sorting endosomes (SE) along microtubule tracks toward the microtubule organizing center/centrosome, generating the endocytic recycling compartment (ERC) during interphase of cell cycle. Facilitates the interaction between dynein and dynactin and activates dynein processivity. Binding with ASAP1 is needed to regulate the pericentrosomal localization of recycling endosomes. The Rab11-RAB11FIP3 complex is also implicated in the transport during telophase of vesicles derived from recycling endosomes to the cleavage furrow via centrosome-anchored microtubules, where the vesicles function to deliver membrane during late cytokinesis and abscission. The recruitment of Rab11-RAB11FIP3-containing endosomes to the cleavage furrow and tethering to the midbody is co-mediated by RAB11FIP3 interaction with ARF6-exocyst and RACGAP1-MKLP1 tethering complexes. Also involved in the Rab11-Rabin8-Rab8 ciliogenesis cascade by facilitating the orderly assembly of a ciliary targeting complex containing Rab11, ASAP1, Rabin8/RAB3IP, RAB11FIP3 and ARF4, which directs preciliary vesicle trafficking to mother centriole and ciliogenesis initiation. Also promotes the activity of Rab11 and ASAP1 in the ARF4-dependent Golgi-to-cilia transport of the sensory receptor rhodopsin. Competes with WDR44 for binding to Rab11, which controls intracellular ciliogenesis pathway. May play a role in breast cancer cell motility by regulating actin cytoskeleton. This Mus musculus (Mouse) protein is Rab11 family-interacting protein 3.